The primary structure comprises 771 residues: MFDVKKVSIEWGGETLTLETGKVARQADGAVIATLGETVVLCAVTAAKSVKDGQDFFPLTVHYQEKYSAAGRIPGGFFKRERGATEKETLVSRLIDRPIRPLFPEGFYNEINAIAQVLSYDGHNEPDILAMVAASAALTISGVPFMGPIGAARVGYLNGEYILNPTDEQVAEGDLDLVVAATHDAVMMVESEANELSEEVMLGAVLFAHDACKEVVKAIIKLAEQAAKEPWEIASSDDDAALKDKLRKLIGKDIAAAYKLTDKSARSNALNEARAKAKESFIADGLDPQAVMAGIKIVKKLEAEIVRTAILKEGKRIDGRTTTQIRPIVAETHFLPRAHGSALFTRGETQTIATCTLGTKDAEQMIDGLNGLSYQHFMLHYNFPPYSVGEVGRFGAPGRREVGHGKLAWRALHPVLPSKDEFPYTIRLTSDITESNGSSSMASVCGGSLAMMDAGVPIKRPVSGIAMGLILEGKDYAILSDILGDEDHLGDMDFKVAGTSEGITTMQMDIKIAGITREIFEAALAQAKEGRAHILGEMNKALGEVRTELSAHAPRIETMQIDKAKIRDVIGTGGKVIREIVATTGAKVDIDDEGLIKISSSDLDQIEAARKWIAGIVEEAEVGKIYDGKVVNLVDFGAFVNFMGGKDGLVHVSEIRNERVEKVADVLSEGQDVKVKVLEIDPRGKVRLSMRVVDQETGAELEDTRPAREPRERGDRGDRGDRGPRRDGGDRNRGGRERGPRRDGGGDRGPRRERSEDGPEDQGHVPDFLKD.

Residues Asp487 and Asp493 each coordinate Mg(2+). Positions 554 to 613 (PRIETMQIDKAKIRDVIGTGGKVIREIVATTGAKVDIDDEGLIKISSSDLDQIEAARKWI) constitute a KH domain. Residues 623–691 (GKIYDGKVVN…PRGKVRLSMR (69 aa)) enclose the S1 motif domain. Residues 696 to 771 (ETGAELEDTR…QGHVPDFLKD (76 aa)) are disordered. Positions 702–771 (EDTRPAREPR…QGHVPDFLKD (70 aa)) are enriched in basic and acidic residues.

Belongs to the polyribonucleotide nucleotidyltransferase family. Mg(2+) is required as a cofactor.

The protein localises to the cytoplasm. It catalyses the reaction RNA(n+1) + phosphate = RNA(n) + a ribonucleoside 5'-diphosphate. Functionally, involved in mRNA degradation. Catalyzes the phosphorolysis of single-stranded polyribonucleotides processively in the 3'- to 5'-direction. This Sphingopyxis alaskensis (strain DSM 13593 / LMG 18877 / RB2256) (Sphingomonas alaskensis) protein is Polyribonucleotide nucleotidyltransferase.